Here is a 242-residue protein sequence, read N- to C-terminus: MNQVARGAGAKRYADAKAALAGVVADGQTLAVGGFGLCGIPEALIAALRDSAVSGLTVISNNAGVDGFGLGQLLATRQIRKMISSYVGENKEFERQYLAGELELEFNPQGTLAERLRAGGAGIPAFYTATGYGTIVAYGKETREFDGKHYVLETALQADVALIKAWRADTAGNLVFRKTARNFNPACAMAGRVCIAEVEEIVELGAIDPDQVHLPGIYIDRLVLNATPEKRIEQRTVRQGDK.

33–39 (GGFGLCG) lines the CoA pocket.

It belongs to the 3-oxoacid CoA-transferase subunit A family. In terms of assembly, heterodimer of a subunit A and a subunit B.

The enzyme catalyses a 3-oxo acid + succinyl-CoA = a 3-oxoacyl-CoA + succinate. Its pathway is bacterial outer membrane biogenesis; lipopolysaccharide biosynthesis. The polypeptide is Succinyl-CoA:3-ketoacid coenzyme A transferase subunit A (lpsI) (Xanthomonas campestris pv. campestris (strain ATCC 33913 / DSM 3586 / NCPPB 528 / LMG 568 / P 25)).